We begin with the raw amino-acid sequence, 104 residues long: Large ribosomal subunit protein uL24 (104 aa).

Belongs to the universal ribosomal protein uL24 family. Part of the 50S ribosomal subunit.

In terms of biological role, one of two assembly initiator proteins, it binds directly to the 5'-end of the 23S rRNA, where it nucleates assembly of the 50S subunit. Its function is as follows. One of the proteins that surrounds the polypeptide exit tunnel on the outside of the subunit. The polypeptide is Large ribosomal subunit protein uL24 (Pseudomonas fluorescens (strain Pf0-1)).